The chain runs to 365 residues: MATLSSLLLTALLWVPVGTLTCYGDSGQPVDWFVVYKLPAHTGSGDATQNGLRYKYFDEHSEDWSDGVGFINSTTGAVGRSLLPLYRNNNSQLAFVLYNDQPPKSSESKDSSSRGHTKGVLLLDQEGGFWLIHSVPNFPPRASSAVYSWPPGAQKYGQTLICVSFPLTQFLDISKQLTYTYPLVYDHRLEGDFAQKFPYLEEVVKGHHVRQGPWNSSVTLTSKKGATFQSFAKFGNFGDDLYSGWLSEALGSTLQVQFWQRSSGILPSNCSGAQHVFDVTQTAFPGPAGPAFNATEDHSKWCVTPKGPWACVGDMNRNQREEHRGGGTLCAQMLWKAFKPLVKAWEPCEKKSRAYSLGSPAGLWT.

A signal peptide spans 1 to 19 (MATLSSLLLTALLWVPVGT). A disulfide bridge connects residues C22 and C162. N-linked (GlcNAc...) asparagine glycosylation is found at N215, N269, and N293. 2 disulfide bridges follow: C270-C348 and C311-C330. H298 is a catalytic residue.

Belongs to the DNase II family.

It is found in the lysosome. It carries out the reaction Endonucleolytic cleavage to nucleoside 3'-phosphates and 3'-phosphooligonucleotide end-products.. Functionally, hydrolyzes DNA under acidic conditions with a preference for double-stranded DNA. Plays a major role in the clearance of nucleic acids generated through apoptosis, hence preventing autoinflammation. Necessary for proper fetal development and for definitive erythropoiesis in fetal liver and bone marrow, where it degrades nuclear DNA expelled from erythroid precursor cells. This is Deoxyribonuclease-2-alpha (DNASE2) from Bos taurus (Bovine).